The primary structure comprises 71 residues: Beta-defensin 131A (71 aa).

The signal sequence occupies residues 1 to 22 (MRVLFFVFGVLSLMFTVPPARS). Cystine bridges form between Cys-29/Cys-57, Cys-37/Cys-51, and Cys-41/Cys-58.

This sequence belongs to the beta-defensin family.

The protein localises to the secreted. Its function is as follows. Has antibacterial activity. Upon stimulation with lipoteichoic acid, promotes cytokines and chemokines production and secretion. This chain is Beta-defensin 131A, found in Pan troglodytes (Chimpanzee).